The following is a 275-amino-acid chain: Elongation factor Ts (275 aa).

The involved in Mg(2+) ion dislocation from EF-Tu stretch occupies residues 76–79 (TDFV).

This sequence belongs to the EF-Ts family.

It is found in the cytoplasm. Functionally, associates with the EF-Tu.GDP complex and induces the exchange of GDP to GTP. It remains bound to the aminoacyl-tRNA.EF-Tu.GTP complex up to the GTP hydrolysis stage on the ribosome. The protein is Elongation factor Ts of Salinispora tropica (strain ATCC BAA-916 / DSM 44818 / JCM 13857 / NBRC 105044 / CNB-440).